The following is a 224-amino-acid chain: UPF0758 protein lmo1549 (224 aa).

Residues 102–224 (VVRCPEDAVK…YISLKEKGYF (123 aa)) enclose the MPN domain. 3 residues coordinate Zn(2+): His173, His175, and Asp186. Residues 173 to 186 (HNHPSGDPTPSSED) carry the JAMM motif motif.

The protein belongs to the UPF0758 family.

The protein is UPF0758 protein lmo1549 of Listeria monocytogenes serovar 1/2a (strain ATCC BAA-679 / EGD-e).